Reading from the N-terminus, the 282-residue chain is NADPH-dependent 7-cyano-7-deazaguanine reductase (282 aa).

Position 82–84 (82–84) interacts with substrate; that stretch reads IES. An NADPH-binding site is contributed by 84–85; that stretch reads SK. Residue cysteine 189 is the Thioimide intermediate of the active site. Catalysis depends on aspartate 196, which acts as the Proton donor. 228-229 contacts substrate; that stretch reads HE. Position 257-258 (257-258) interacts with NADPH; it reads RG.

This sequence belongs to the GTP cyclohydrolase I family. QueF type 2 subfamily. In terms of assembly, homodimer.

Its subcellular location is the cytoplasm. It catalyses the reaction 7-aminomethyl-7-carbaguanine + 2 NADP(+) = 7-cyano-7-deazaguanine + 2 NADPH + 3 H(+). The protein operates within tRNA modification; tRNA-queuosine biosynthesis. In terms of biological role, catalyzes the NADPH-dependent reduction of 7-cyano-7-deazaguanine (preQ0) to 7-aminomethyl-7-deazaguanine (preQ1). The protein is NADPH-dependent 7-cyano-7-deazaguanine reductase of Delftia acidovorans (strain DSM 14801 / SPH-1).